The primary structure comprises 399 residues: Elongation factor Tu (399 aa).

The tr-type G domain maps to 10–207 (KPHLNIGTIG…AVDNYVPEPQ (198 aa)). A G1 region spans residues 19 to 26 (GHIDHGKT). A GTP-binding site is contributed by 19 to 26 (GHIDHGKT). A Mg(2+)-binding site is contributed by threonine 26. The tract at residues 60-64 (GITIN) is G2. The G3 stretch occupies residues 81-84 (DCPG). GTP-binding positions include 81 to 85 (DCPGH) and 136 to 139 (NKVD). Residues 136–139 (NKVD) form a G4 region. Residues 174-176 (SAL) form a G5 region.

The protein belongs to the TRAFAC class translation factor GTPase superfamily. Classic translation factor GTPase family. EF-Tu/EF-1A subfamily. As to quaternary structure, monomer.

The protein resides in the cytoplasm. The catalysed reaction is GTP + H2O = GDP + phosphate + H(+). GTP hydrolase that promotes the GTP-dependent binding of aminoacyl-tRNA to the A-site of ribosomes during protein biosynthesis. This chain is Elongation factor Tu, found in Kosmotoga olearia (strain ATCC BAA-1733 / DSM 21960 / TBF 19.5.1).